Here is a 1406-residue protein sequence, read N- to C-terminus: DNA-directed RNA polymerase subunit beta' (1406 aa).

The Zn(2+) site is built by C70, C72, C85, and C88. 3 residues coordinate Mg(2+): D460, D462, and D464. Positions 814, 888, 895, and 898 each coordinate Zn(2+).

It belongs to the RNA polymerase beta' chain family. In terms of assembly, the RNAP catalytic core consists of 2 alpha, 1 beta, 1 beta' and 1 omega subunit. When a sigma factor is associated with the core the holoenzyme is formed, which can initiate transcription. The cofactor is Mg(2+). Zn(2+) serves as cofactor.

It catalyses the reaction RNA(n) + a ribonucleoside 5'-triphosphate = RNA(n+1) + diphosphate. Its function is as follows. DNA-dependent RNA polymerase catalyzes the transcription of DNA into RNA using the four ribonucleoside triphosphates as substrates. In Colwellia psychrerythraea (strain 34H / ATCC BAA-681) (Vibrio psychroerythus), this protein is DNA-directed RNA polymerase subunit beta'.